The primary structure comprises 288 residues: Acetylglutamate kinase (288 aa).

Substrate-binding positions include 73-74 (GG), Arg-95, and Asn-186.

This sequence belongs to the acetylglutamate kinase family. ArgB subfamily.

It localises to the cytoplasm. The catalysed reaction is N-acetyl-L-glutamate + ATP = N-acetyl-L-glutamyl 5-phosphate + ADP. Its pathway is amino-acid biosynthesis; L-arginine biosynthesis; N(2)-acetyl-L-ornithine from L-glutamate: step 2/4. Catalyzes the ATP-dependent phosphorylation of N-acetyl-L-glutamate. The protein is Acetylglutamate kinase of Pelagibacter ubique (strain HTCC1062).